Consider the following 233-residue polypeptide: MADS-box transcription factor 56 (233 aa).

Residues 1 to 61 (MVRGRTELKR…GRLYEFASAP (61 aa)) form the MADS-box domain. In terms of domain architecture, K-box spans 87 to 177 (IQQVKDDTLG…RGKHRNLEAA (91 aa)).

It is found in the nucleus. In terms of biological role, probable transcription factor. This Oryza sativa subsp. japonica (Rice) protein is MADS-box transcription factor 56 (MADS56).